A 460-amino-acid chain; its full sequence is Bifunctional protein GlmU (460 aa).

The tract at residues Met1 to Pro237 is pyrophosphorylase. UDP-N-acetyl-alpha-D-glucosamine contacts are provided by residues Leu13–Gly16, Lys27, Gln78, and Gly83–Thr84. Position 109 (Asp109) interacts with Mg(2+). 4 residues coordinate UDP-N-acetyl-alpha-D-glucosamine: Gly146, Glu160, Asn177, and Asn235. Asn235 contributes to the Mg(2+) binding site. Residues Ala238–Asn258 form a linker region. Residues Gly259–Ser460 are N-acetyltransferase. The UDP-N-acetyl-alpha-D-glucosamine site is built by Arg341 and Lys359. The active-site Proton acceptor is His371. Positions 374 and 385 each coordinate UDP-N-acetyl-alpha-D-glucosamine. Acetyl-CoA contacts are provided by residues Ala388, Asn394 to Tyr395, Ser413, Ala431, and Arg448.

In the N-terminal section; belongs to the N-acetylglucosamine-1-phosphate uridyltransferase family. The protein in the C-terminal section; belongs to the transferase hexapeptide repeat family. Homotrimer. Mg(2+) is required as a cofactor.

Its subcellular location is the cytoplasm. It carries out the reaction alpha-D-glucosamine 1-phosphate + acetyl-CoA = N-acetyl-alpha-D-glucosamine 1-phosphate + CoA + H(+). The enzyme catalyses N-acetyl-alpha-D-glucosamine 1-phosphate + UTP + H(+) = UDP-N-acetyl-alpha-D-glucosamine + diphosphate. It participates in nucleotide-sugar biosynthesis; UDP-N-acetyl-alpha-D-glucosamine biosynthesis; N-acetyl-alpha-D-glucosamine 1-phosphate from alpha-D-glucosamine 6-phosphate (route II): step 2/2. The protein operates within nucleotide-sugar biosynthesis; UDP-N-acetyl-alpha-D-glucosamine biosynthesis; UDP-N-acetyl-alpha-D-glucosamine from N-acetyl-alpha-D-glucosamine 1-phosphate: step 1/1. Its pathway is bacterial outer membrane biogenesis; LPS lipid A biosynthesis. Its function is as follows. Catalyzes the last two sequential reactions in the de novo biosynthetic pathway for UDP-N-acetylglucosamine (UDP-GlcNAc). The C-terminal domain catalyzes the transfer of acetyl group from acetyl coenzyme A to glucosamine-1-phosphate (GlcN-1-P) to produce N-acetylglucosamine-1-phosphate (GlcNAc-1-P), which is converted into UDP-GlcNAc by the transfer of uridine 5-monophosphate (from uridine 5-triphosphate), a reaction catalyzed by the N-terminal domain. In Oleidesulfovibrio alaskensis (strain ATCC BAA-1058 / DSM 17464 / G20) (Desulfovibrio alaskensis), this protein is Bifunctional protein GlmU.